The following is a 185-amino-acid chain: Ribosome-recycling factor (185 aa).

It belongs to the RRF family.

It localises to the cytoplasm. In terms of biological role, responsible for the release of ribosomes from messenger RNA at the termination of protein biosynthesis. May increase the efficiency of translation by recycling ribosomes from one round of translation to another. This Chromobacterium violaceum (strain ATCC 12472 / DSM 30191 / JCM 1249 / CCUG 213 / NBRC 12614 / NCIMB 9131 / NCTC 9757 / MK) protein is Ribosome-recycling factor.